The sequence spans 338 residues: Large ribosomal subunit protein uL10 (338 aa).

Residues 298 to 308 are compositionally biased toward low complexity; the sequence is AAQQTQTQQST. The interval 298-338 is disordered; the sequence is AAQQTQTQQSTAEEKKEEKKEEEKKGPSEEEIGSGLASLFG. Positions 309–325 are enriched in basic and acidic residues; the sequence is AEEKKEEKKEEEKKGPS.

This sequence belongs to the universal ribosomal protein uL10 family. Part of the 50S ribosomal subunit. Forms part of the ribosomal stalk which helps the ribosome interact with GTP-bound translation factors. Forms a heptameric L10(L12)2(L12)2(L12)2 complex, where L10 forms an elongated spine to which the L12 dimers bind in a sequential fashion.

Its function is as follows. Forms part of the ribosomal stalk, playing a central role in the interaction of the ribosome with GTP-bound translation factors. The sequence is that of Large ribosomal subunit protein uL10 from Saccharolobus islandicus (strain M.16.27) (Sulfolobus islandicus).